The primary structure comprises 259 residues: GTP-binding protein RHO4 (259 aa).

59-66 (GDGATGKT) contributes to the GTP binding site. The Effector region signature appears at 81-89 (YVPTIFENY). GTP-binding positions include 107–111 (DTAGQ) and 165–168 (LKSD). Cysteine 256 bears the Cysteine methyl ester mark. Residue cysteine 256 is the site of S-geranylgeranyl cysteine attachment. Positions 257–259 (VVL) are cleaved as a propeptide — removed in mature form.

Belongs to the small GTPase superfamily. Rho family.

The protein resides in the cell membrane. This chain is GTP-binding protein RHO4 (RHO4), found in Eremothecium gossypii (strain ATCC 10895 / CBS 109.51 / FGSC 9923 / NRRL Y-1056) (Yeast).